A 55-amino-acid polypeptide reads, in one-letter code: uncharacterized protein (55 aa).

The signal sequence occupies residues 1-19 (MQILLVVRLVLLWLGGLSA).

This is an uncharacterized protein from Orgyia pseudotsugata multicapsid polyhedrosis virus (OpMNPV).